The following is a 243-amino-acid chain: Eukaryotic translation initiation factor 4E-2 (243 aa).

Belongs to the eukaryotic initiation factor 4E family. EIF4F is a multi-subunit complex, the composition of which varies with external and internal environmental conditions. It is composed of at least eIF4A, eIF4E and eIF4G. eIF4E is also known to interact with other partners.

In terms of biological role, recognizes and binds the 7-methylguanosine-containing mRNA cap during an early step in the initiation of protein synthesis and facilitates ribosome binding by inducing the unwinding of the mRNAs secondary structures. This chain is Eukaryotic translation initiation factor 4E-2 (tif452), found in Schizosaccharomyces pombe (strain 972 / ATCC 24843) (Fission yeast).